The following is a 139-amino-acid chain: IRQNHQDEPQYGQQVAPIDQRVQRLVMALVFAAKSDGHIERKMRSIIEQNMREAGISEQGERLVQQAIDQPLDPQLLARDIQNEEEALELYFLSCAVIDVDHFMERTYLAALGHALKIPQDVRDGIEQDIREKKQSITD.

To E.coli YebE.

This is an uncharacterized protein from Yersinia enterocolitica.